The sequence spans 95 residues: Phosphoribosyl-ATP pyrophosphatase (95 aa).

This sequence belongs to the PRA-PH family.

The protein resides in the cytoplasm. It carries out the reaction 1-(5-phospho-beta-D-ribosyl)-ATP + H2O = 1-(5-phospho-beta-D-ribosyl)-5'-AMP + diphosphate + H(+). It functions in the pathway amino-acid biosynthesis; L-histidine biosynthesis; L-histidine from 5-phospho-alpha-D-ribose 1-diphosphate: step 2/9. In Methanocella arvoryzae (strain DSM 22066 / NBRC 105507 / MRE50), this protein is Phosphoribosyl-ATP pyrophosphatase.